The primary structure comprises 278 residues: Diaminopimelate epimerase (278 aa).

Substrate is bound by residues asparagine 11 and asparagine 63. The active-site Proton donor is cysteine 72. Substrate contacts are provided by residues 73-74, asparagine 160, asparagine 193, and 211-212; these read GN and ER. Cysteine 220 (proton acceptor) is an active-site residue. 221–222 contacts substrate; the sequence is GT.

Belongs to the diaminopimelate epimerase family. As to quaternary structure, homodimer.

Its subcellular location is the cytoplasm. It catalyses the reaction (2S,6S)-2,6-diaminopimelate = meso-2,6-diaminopimelate. It participates in amino-acid biosynthesis; L-lysine biosynthesis via DAP pathway; DL-2,6-diaminopimelate from LL-2,6-diaminopimelate: step 1/1. Its function is as follows. Catalyzes the stereoinversion of LL-2,6-diaminopimelate (L,L-DAP) to meso-diaminopimelate (meso-DAP), a precursor of L-lysine and an essential component of the bacterial peptidoglycan. This is Diaminopimelate epimerase from Desulforudis audaxviator (strain MP104C).